The chain runs to 240 residues: Uridylate kinase (240 aa).

Position 13 to 16 (Lys-13 to Gly-16) interacts with ATP. The segment at Gly-21–Gly-26 is involved in allosteric activation by GTP. UMP is bound at residue Gly-55. Residues Gly-56 and Arg-60 each contribute to the ATP site. UMP-binding positions include Asp-75 and Ile-136 to Thr-143. 3 residues coordinate ATP: Asn-164, Tyr-170, and Asp-173.

The protein belongs to the UMP kinase family. As to quaternary structure, homohexamer.

It localises to the cytoplasm. It carries out the reaction UMP + ATP = UDP + ADP. It functions in the pathway pyrimidine metabolism; CTP biosynthesis via de novo pathway; UDP from UMP (UMPK route): step 1/1. Its activity is regulated as follows. Allosterically activated by GTP. Inhibited by UTP. Catalyzes the reversible phosphorylation of UMP to UDP. This chain is Uridylate kinase, found in Staphylococcus epidermidis (strain ATCC 35984 / DSM 28319 / BCRC 17069 / CCUG 31568 / BM 3577 / RP62A).